We begin with the raw amino-acid sequence, 106 residues long: Putative regulatory protein MalR (106 aa).

In terms of domain architecture, HTH hxlR-type spans 12 to 106; that stretch reads CSIEYTLSFM…NLMHKWGQEN (95 aa).

Potential regulator of the malBH genes. The sequence is that of Putative regulatory protein MalR (malR) from Fusobacterium mortiferum.